The sequence spans 152 residues: Acidic phospholipase A2 1 (152 aa).

Residues Met1 to Ala19 form the signal peptide. The propeptide occupies Ala20–Leu27. 7 cysteine pairs are disulfide-bonded: Cys38–Cys104, Cys54–Cys151, Cys56–Cys72, Cys71–Cys132, Cys78–Cys125, Cys88–Cys118, and Cys111–Cys123. Residues Tyr55, Gly57, and Gly59 each coordinate Ca(2+). His75 is a catalytic residue. Asp76 contributes to the Ca(2+) binding site. The active site involves Asp126.

This sequence belongs to the phospholipase A2 family. Group I subfamily. D49 sub-subfamily. Ca(2+) serves as cofactor. In terms of tissue distribution, expressed by the venom gland.

Its subcellular location is the secreted. The enzyme catalyses a 1,2-diacyl-sn-glycero-3-phosphocholine + H2O = a 1-acyl-sn-glycero-3-phosphocholine + a fatty acid + H(+). PLA2 catalyzes the calcium-dependent hydrolysis of the 2-acyl groups in 3-sn-phosphoglycerides. This is Acidic phospholipase A2 1 from Bungarus candidus (Malayan krait).